Consider the following 277-residue polypeptide: 3-methyl-2-oxobutanoate hydroxymethyltransferase (277 aa).

Asp-49 and Asp-88 together coordinate Mg(2+). Residues 49 to 50 (DS), Asp-88, and Lys-118 contribute to the 3-methyl-2-oxobutanoate site. Mg(2+) is bound at residue Glu-120. Catalysis depends on Glu-186, which acts as the Proton acceptor.

It belongs to the PanB family. Homodecamer; pentamer of dimers. It depends on Mg(2+) as a cofactor.

It is found in the cytoplasm. The enzyme catalyses 3-methyl-2-oxobutanoate + (6R)-5,10-methylene-5,6,7,8-tetrahydrofolate + H2O = 2-dehydropantoate + (6S)-5,6,7,8-tetrahydrofolate. It functions in the pathway cofactor biosynthesis; (R)-pantothenate biosynthesis; (R)-pantoate from 3-methyl-2-oxobutanoate: step 1/2. In terms of biological role, catalyzes the reversible reaction in which hydroxymethyl group from 5,10-methylenetetrahydrofolate is transferred onto alpha-ketoisovalerate to form ketopantoate. The protein is 3-methyl-2-oxobutanoate hydroxymethyltransferase of Cereibacter sphaeroides (strain ATCC 17025 / ATH 2.4.3) (Rhodobacter sphaeroides).